Here is a 512-residue protein sequence, read N- to C-terminus: Maturase K (512 aa).

This sequence belongs to the intron maturase 2 family. MatK subfamily.

It is found in the plastid. Its subcellular location is the chloroplast. In terms of biological role, usually encoded in the trnK tRNA gene intron. Probably assists in splicing its own and other chloroplast group II introns. In Zantedeschia aethiopica (White calla lily), this protein is Maturase K.